The following is a 354-amino-acid chain: MAKQAIKRAKILAVKNNNKIGVLLINLGTPDEPSVPAVRRYLRQFLSDPKVIDVPSLMRWIIVHLCILPFRPKRSAKLYQKIWMPEGSPLLVYSEMLRERVGETLGDDFCVALGMRYGKPSIETALKKLQEAQCRQLIVLPLFPQYSTSTTASALEEVRAKNSFKEMTVIDRFFEEPHYIDSMTTLIHENLNEFQPDYFLFSYHGLPERHLVKSGCQLAICNRKNNCSPISSSNENCYRAQCFETSRLIAKKLNLTDQQYGVAFQSRLGRAKWIEPYTDKYLIELSKKGIKKLMVVCPSFPVDCLETLEEIGIRAQSQWQRLGGETLKLIPSLNAHPQWVNAIAKMAKKSLQLF.

Residues H204 and E306 each contribute to the Fe cation site.

The protein belongs to the ferrochelatase family.

It is found in the cytoplasm. It catalyses the reaction heme b + 2 H(+) = protoporphyrin IX + Fe(2+). It functions in the pathway porphyrin-containing compound metabolism; protoheme biosynthesis; protoheme from protoporphyrin-IX: step 1/1. Functionally, catalyzes the ferrous insertion into protoporphyrin IX. In Coxiella burnetii (strain Dugway 5J108-111), this protein is Ferrochelatase.